Reading from the N-terminus, the 116-residue chain is Ribonuclease P protein component (116 aa).

Belongs to the RnpA family. As to quaternary structure, consists of a catalytic RNA component (M1 or rnpB) and a protein subunit.

It carries out the reaction Endonucleolytic cleavage of RNA, removing 5'-extranucleotides from tRNA precursor.. Its function is as follows. RNaseP catalyzes the removal of the 5'-leader sequence from pre-tRNA to produce the mature 5'-terminus. It can also cleave other RNA substrates such as 4.5S RNA. The protein component plays an auxiliary but essential role in vivo by binding to the 5'-leader sequence and broadening the substrate specificity of the ribozyme. The protein is Ribonuclease P protein component of Bacillus velezensis (strain DSM 23117 / BGSC 10A6 / LMG 26770 / FZB42) (Bacillus amyloliquefaciens subsp. plantarum).